We begin with the raw amino-acid sequence, 252 residues long: Ubiquinone biosynthesis O-methyltransferase (252 aa).

R51, G70, D91, and M136 together coordinate S-adenosyl-L-methionine.

This sequence belongs to the methyltransferase superfamily. UbiG/COQ3 family.

The catalysed reaction is a 3-demethylubiquinol + S-adenosyl-L-methionine = a ubiquinol + S-adenosyl-L-homocysteine + H(+). It carries out the reaction a 3-(all-trans-polyprenyl)benzene-1,2-diol + S-adenosyl-L-methionine = a 2-methoxy-6-(all-trans-polyprenyl)phenol + S-adenosyl-L-homocysteine + H(+). Its pathway is cofactor biosynthesis; ubiquinone biosynthesis. Its function is as follows. O-methyltransferase that catalyzes the 2 O-methylation steps in the ubiquinone biosynthetic pathway. This chain is Ubiquinone biosynthesis O-methyltransferase, found in Albidiferax ferrireducens (strain ATCC BAA-621 / DSM 15236 / T118) (Rhodoferax ferrireducens).